A 91-amino-acid chain; its full sequence is Small ribosomal subunit protein uS15 (91 aa).

Belongs to the universal ribosomal protein uS15 family. In terms of assembly, part of the 30S ribosomal subunit. Forms a bridge to the 50S subunit in the 70S ribosome, contacting the 23S rRNA.

Its function is as follows. One of the primary rRNA binding proteins, it binds directly to 16S rRNA where it helps nucleate assembly of the platform of the 30S subunit by binding and bridging several RNA helices of the 16S rRNA. In terms of biological role, forms an intersubunit bridge (bridge B4) with the 23S rRNA of the 50S subunit in the ribosome. This is Small ribosomal subunit protein uS15 from Rickettsia canadensis (strain McKiel).